A 55-amino-acid chain; its full sequence is Accessory gland-specific peptide 70A (55 aa).

The N-terminal stretch at 1–19 (MKTLALFLVLVCVLGLVQS) is a signal peptide. An essential for binding to sperm region spans residues 20–33 (WEWPWNRKPTKFPI). A hydroxyproline mark is found at P28 and P32. I33 is modified (isoleucine derivative). A hydroxyproline mark is found at P34, P36, and P38. The segment at 36–55 (PNPRDKWCRLNLGPAWGGRC) is sufficient to induce PMR. An intrachain disulfide couples C43 to C55.

The protein belongs to the Drosophila sex peptide family. Post-translationally, sperm-bound protein is cleaved to release an active C-terminal peptide. Gradual release from stored sperm may function to prolong PMR and enhance male reproductive success. Main cells of the accessory glands of males (paragonial gland).

It is found in the secreted. Functionally, male seminal protein which triggers short- and long-term post-mating behavioral responses (PMR) in female Drosophila. Binds initially to sperm where it is later cleaved to release an active peptide within the female reproductive tract. Signals via the sex peptide receptor (SPR) in female flies; may also act via other receptors. Moderates the activity of distinct neuronal circuitries in the female genital tract to promote specific PMRs including: enhanced ovulation, increased egg laying rate, increased feeding/foraging rate, induced antimicrobial peptide synthesis, reduced mating receptivity, reduced day-time sleep and reduced lifespan in multiple mated females. This chain is Accessory gland-specific peptide 70A (SP), found in Drosophila melanogaster (Fruit fly).